Consider the following 599-residue polypeptide: Adenine deaminase (599 aa).

It belongs to the metallo-dependent hydrolases superfamily. Adenine deaminase family. The cofactor is Mn(2+).

The catalysed reaction is adenine + H2O + H(+) = hypoxanthine + NH4(+). The sequence is that of Adenine deaminase from Clostridium botulinum (strain 657 / Type Ba4).